Consider the following 362-residue polypeptide: Chorismate synthase (362 aa).

Residue R47 participates in NADP(+) binding. Residues 124–126 (RAS), G286, 301–305 (KPTAT), and R327 each bind FMN.

Belongs to the chorismate synthase family. Homotetramer. FMNH2 serves as cofactor.

The catalysed reaction is 5-O-(1-carboxyvinyl)-3-phosphoshikimate = chorismate + phosphate. Its pathway is metabolic intermediate biosynthesis; chorismate biosynthesis; chorismate from D-erythrose 4-phosphate and phosphoenolpyruvate: step 7/7. Catalyzes the anti-1,4-elimination of the C-3 phosphate and the C-6 proR hydrogen from 5-enolpyruvylshikimate-3-phosphate (EPSP) to yield chorismate, which is the branch point compound that serves as the starting substrate for the three terminal pathways of aromatic amino acid biosynthesis. This reaction introduces a second double bond into the aromatic ring system. The protein is Chorismate synthase of Synechococcus sp. (strain WH7803).